The following is a 124-amino-acid chain: Holo-[acyl-carrier-protein] synthase (124 aa).

The Mg(2+) site is built by Asp-5 and Glu-56.

This sequence belongs to the P-Pant transferase superfamily. AcpS family. Mg(2+) is required as a cofactor.

It is found in the cytoplasm. It carries out the reaction apo-[ACP] + CoA = holo-[ACP] + adenosine 3',5'-bisphosphate + H(+). Functionally, transfers the 4'-phosphopantetheine moiety from coenzyme A to a Ser of acyl-carrier-protein. This Campylobacter hominis (strain ATCC BAA-381 / DSM 21671 / CCUG 45161 / LMG 19568 / NCTC 13146 / CH001A) protein is Holo-[acyl-carrier-protein] synthase.